A 292-amino-acid chain; its full sequence is Ribosomal protein L11 methyltransferase (292 aa).

S-adenosyl-L-methionine-binding residues include Thr144, Gly165, Asp187, and Asn229.

The protein belongs to the methyltransferase superfamily. PrmA family.

The protein resides in the cytoplasm. It carries out the reaction L-lysyl-[protein] + 3 S-adenosyl-L-methionine = N(6),N(6),N(6)-trimethyl-L-lysyl-[protein] + 3 S-adenosyl-L-homocysteine + 3 H(+). In terms of biological role, methylates ribosomal protein L11. The protein is Ribosomal protein L11 methyltransferase of Pseudomonas syringae pv. tomato (strain ATCC BAA-871 / DC3000).